We begin with the raw amino-acid sequence, 383 residues long: UPF0425 pyridoxal phosphate-dependent protein Msp_0916 (383 aa).

Lysine 207 is subject to N6-(pyridoxal phosphate)lysine.

It belongs to the UPF0425 family. Requires pyridoxal 5'-phosphate as cofactor.

The polypeptide is UPF0425 pyridoxal phosphate-dependent protein Msp_0916 (Methanosphaera stadtmanae (strain ATCC 43021 / DSM 3091 / JCM 11832 / MCB-3)).